The following is a 196-amino-acid chain: FMN-dependent NADH:quinone oxidoreductase (196 aa).

Position 10 (Ser10) interacts with FMN.

It belongs to the azoreductase type 1 family. As to quaternary structure, homodimer. The cofactor is FMN.

The enzyme catalyses 2 a quinone + NADH + H(+) = 2 a 1,4-benzosemiquinone + NAD(+). The catalysed reaction is N,N-dimethyl-1,4-phenylenediamine + anthranilate + 2 NAD(+) = 2-(4-dimethylaminophenyl)diazenylbenzoate + 2 NADH + 2 H(+). Its function is as follows. Quinone reductase that provides resistance to thiol-specific stress caused by electrophilic quinones. Functionally, also exhibits azoreductase activity. Catalyzes the reductive cleavage of the azo bond in aromatic azo compounds to the corresponding amines. In Cereibacter sphaeroides (strain KD131 / KCTC 12085) (Rhodobacter sphaeroides), this protein is FMN-dependent NADH:quinone oxidoreductase.